Consider the following 660-residue polypeptide: DNA mismatch repair protein MutL (660 aa).

The interval 408-436 (DQTSASASVKHASRSQDENQLSEHPNLDF) is disordered. The segment covering 425–436 (ENQLSEHPNLDF) has biased composition (polar residues).

It belongs to the DNA mismatch repair MutL/HexB family.

In terms of biological role, this protein is involved in the repair of mismatches in DNA. It is required for dam-dependent methyl-directed DNA mismatch repair. May act as a 'molecular matchmaker', a protein that promotes the formation of a stable complex between two or more DNA-binding proteins in an ATP-dependent manner without itself being part of a final effector complex. This Streptococcus uberis (strain ATCC BAA-854 / 0140J) protein is DNA mismatch repair protein MutL.